The sequence spans 266 residues: Undecaprenyl-diphosphatase (266 aa).

8 helical membrane-spanning segments follow: residues 1 to 21 (MDTF…FLPI), 39 to 59 (QGLS…VIYF), 87 to 107 (WWII…KDFI), 111 to 131 (LRSA…LWWA), 149 to 169 (ALLI…RSGA), 183 to 203 (AAAR…AILV), 218 to 238 (ALTL…HYFL), and 246 to 266 (MTPF…FIFL).

This sequence belongs to the UppP family.

It localises to the cell inner membrane. It catalyses the reaction di-trans,octa-cis-undecaprenyl diphosphate + H2O = di-trans,octa-cis-undecaprenyl phosphate + phosphate + H(+). Catalyzes the dephosphorylation of undecaprenyl diphosphate (UPP). Confers resistance to bacitracin. This chain is Undecaprenyl-diphosphatase, found in Shewanella sp. (strain MR-7).